Here is a 94-residue protein sequence, read N- to C-terminus: Pyrimidine/purine nucleoside phosphorylase (94 aa).

It belongs to the nucleoside phosphorylase PpnP family.

It carries out the reaction a purine D-ribonucleoside + phosphate = a purine nucleobase + alpha-D-ribose 1-phosphate. It catalyses the reaction adenosine + phosphate = alpha-D-ribose 1-phosphate + adenine. The catalysed reaction is cytidine + phosphate = cytosine + alpha-D-ribose 1-phosphate. The enzyme catalyses guanosine + phosphate = alpha-D-ribose 1-phosphate + guanine. It carries out the reaction inosine + phosphate = alpha-D-ribose 1-phosphate + hypoxanthine. It catalyses the reaction thymidine + phosphate = 2-deoxy-alpha-D-ribose 1-phosphate + thymine. The catalysed reaction is uridine + phosphate = alpha-D-ribose 1-phosphate + uracil. The enzyme catalyses xanthosine + phosphate = alpha-D-ribose 1-phosphate + xanthine. Its function is as follows. Catalyzes the phosphorolysis of diverse nucleosides, yielding D-ribose 1-phosphate and the respective free bases. Can use uridine, adenosine, guanosine, cytidine, thymidine, inosine and xanthosine as substrates. Also catalyzes the reverse reactions. The polypeptide is Pyrimidine/purine nucleoside phosphorylase (Pectobacterium carotovorum subsp. carotovorum (strain PC1)).